A 441-amino-acid polypeptide reads, in one-letter code: MGGPRAWALLCLGLLLPGGGAAWSIGAAPFSGRRNWCSYVVTRTISCHVQNGTYLQRVLQNCPWPMSCPGSSYRTVVRPTYKVMYKIVTAREWRCCPGHSGVSCEEASSASLEPMWSGSTMRRMALRPTAFSGCLNCSKVSELTERLKVLEAKMTMLTVIEQPVPPTPATPEDPAPLWGPPPAQGSPGDGGLQDQVGAWGLPGPTGPKGDAGSRGPMGMRGPPGPQGPPGSPGRAGAVGTPGERGPPGPPGPPGPPGPPAPVGPPHARISQHGDPLLSNTFTETNNHWPQGPTGPPGPPGPMGPPGPPGPTGVPGSPGHIGPPGPTGPKGISGHPGEKGERGLRGEPGPQGSAGQRGEPGPKGDPGEKSHWGEGLHQLREALKILAERVLILETMIGLYEPELGSGAGPAGTGTPSLLRGKRGGHATNYRIVAPRSRDERG.

Residues 1–22 (MGGPRAWALLCLGLLLPGGGAA) form the signal peptide. The region spanning 33–106 (RRNWCSYVVT…PGHSGVSCEE (74 aa)) is the EMI domain. Cystine bridges form between Cys37-Cys96, Cys62-Cys68, and Cys95-Cys104. Residue Thr42 is glycosylated (O-linked (Fuc) threonine). Asn51 is a glycosylation site (N-linked (GlcNAc...) asparagine). A glycan (N-linked (GlcNAc...) asparagine) is linked at Asn136. Disordered stretches follow at residues 162–371 (QPVP…KSHW) and 405–441 (SGAG…DERG). Composition is skewed to pro residues over residues 163-184 (PVPP…PPAQ) and 222-231 (PPGPQGPPGS). The 190-residue stretch at 179-368 (GPPPAQGSPG…PGPKGDPGEK (190 aa)) folds into the Collagen-like domain. A compositionally biased stretch (low complexity) spans 232–243 (PGRAGAVGTPGE). Residues 244-264 (RGPPGPPGPPGPPGPPAPVGP) show a composition bias toward pro residues. The segment covering 277–288 (LSNTFTETNNHW) has biased composition (polar residues). Residues 292–311 (PTGPPGPPGPMGPPGPPGPT) are compositionally biased toward pro residues. 2 stretches are compositionally biased toward basic and acidic residues: residues 335–344 (PGEKGERGLR) and 359–371 (PGPK…KSHW).

As to quaternary structure, homo- or heteromers. In terms of processing, O-fucosylated at Thr-42 within the EMI domain by FUT10/POFUT3 and FUT11/POFUT4.

It is found in the secreted. Its subcellular location is the extracellular space. The protein resides in the extracellular matrix. This Homo sapiens (Human) protein is EMI domain-containing protein 1 (EMID1).